A 242-amino-acid chain; its full sequence is uncharacterized protein (242 aa).

Residues 3–116 form the Response regulatory domain; it reads TALVIDDEQF…RLNKTVKRLN (114 aa). Asp54 is subject to 4-aspartylphosphate. The HTH LytTR-type domain maps to 139 to 240; that stretch reads IPCIGHNRIV…LKVLKEMLGI (102 aa).

This is an uncharacterized protein from Vibrio parahaemolyticus serotype O3:K6 (strain RIMD 2210633).